Here is a 101-residue protein sequence, read N- to C-terminus: Small ribosomal subunit protein uS14 (101 aa).

This sequence belongs to the universal ribosomal protein uS14 family. As to quaternary structure, part of the 30S ribosomal subunit. Contacts proteins S3 and S10.

In terms of biological role, binds 16S rRNA, required for the assembly of 30S particles and may also be responsible for determining the conformation of the 16S rRNA at the A site. The chain is Small ribosomal subunit protein uS14 from Shewanella oneidensis (strain ATCC 700550 / JCM 31522 / CIP 106686 / LMG 19005 / NCIMB 14063 / MR-1).